The chain runs to 338 residues: Anthranilate phosphoribosyltransferase (338 aa).

5-phospho-alpha-D-ribose 1-diphosphate-binding positions include G81, 84-85, T89, 91-94, 109-117, and A121; these read GD, NIST, and KHGNRNLSS. Residue G81 participates in anthranilate binding. S93 contacts Mg(2+). An anthranilate-binding site is contributed by N112. Position 167 (R167) interacts with anthranilate. 2 residues coordinate Mg(2+): D226 and E227.

It belongs to the anthranilate phosphoribosyltransferase family. Homodimer. Mg(2+) serves as cofactor.

The enzyme catalyses N-(5-phospho-beta-D-ribosyl)anthranilate + diphosphate = 5-phospho-alpha-D-ribose 1-diphosphate + anthranilate. It participates in amino-acid biosynthesis; L-tryptophan biosynthesis; L-tryptophan from chorismate: step 2/5. In terms of biological role, catalyzes the transfer of the phosphoribosyl group of 5-phosphorylribose-1-pyrophosphate (PRPP) to anthranilate to yield N-(5'-phosphoribosyl)-anthranilate (PRA). The protein is Anthranilate phosphoribosyltransferase of Cereibacter sphaeroides (strain KD131 / KCTC 12085) (Rhodobacter sphaeroides).